The chain runs to 357 residues: Protein RecA (357 aa).

ATP is bound at residue 78 to 85 (GPESSGKT).

The protein belongs to the RecA family.

It localises to the cytoplasm. In terms of biological role, can catalyze the hydrolysis of ATP in the presence of single-stranded DNA, the ATP-dependent uptake of single-stranded DNA by duplex DNA, and the ATP-dependent hybridization of homologous single-stranded DNAs. It interacts with LexA causing its activation and leading to its autocatalytic cleavage. In Cereibacter sphaeroides (strain ATCC 17029 / ATH 2.4.9) (Rhodobacter sphaeroides), this protein is Protein RecA.